Reading from the N-terminus, the 536-residue chain is Phosphoenolpyruvate carboxykinase (ATP) (536 aa).

The substrate site is built by arginine 61, tyrosine 195, and lysine 201. ATP contacts are provided by residues lysine 201, histidine 220, and 236–244 (GLSGTGKTT). Residues lysine 201 and histidine 220 each coordinate Mn(2+). Aspartate 257 lines the Mn(2+) pocket. Residues glutamate 285, arginine 322, and threonine 447 each coordinate ATP. A substrate-binding site is contributed by arginine 322.

It belongs to the phosphoenolpyruvate carboxykinase (ATP) family. Mn(2+) is required as a cofactor.

It localises to the cytoplasm. It carries out the reaction oxaloacetate + ATP = phosphoenolpyruvate + ADP + CO2. It participates in carbohydrate biosynthesis; gluconeogenesis. Its function is as follows. Involved in the gluconeogenesis. Catalyzes the conversion of oxaloacetate (OAA) to phosphoenolpyruvate (PEP) through direct phosphoryl transfer between the nucleoside triphosphate and OAA. The chain is Phosphoenolpyruvate carboxykinase (ATP) from Brucella suis biovar 1 (strain 1330).